The following is a 57-amino-acid chain: Large ribosomal subunit protein bL32 (57 aa).

This sequence belongs to the bacterial ribosomal protein bL32 family.

The protein is Large ribosomal subunit protein bL32 of Halothermothrix orenii (strain H 168 / OCM 544 / DSM 9562).